The following is a 429-amino-acid chain: Enolase (429 aa).

Residue glutamine 163 participates in (2R)-2-phosphoglycerate binding. The active-site Proton donor is the glutamate 205. Mg(2+) is bound by residues aspartate 242, glutamate 285, and aspartate 312. (2R)-2-phosphoglycerate contacts are provided by lysine 337, arginine 366, serine 367, and lysine 388. Lysine 337 (proton acceptor) is an active-site residue.

This sequence belongs to the enolase family. It depends on Mg(2+) as a cofactor.

It is found in the cytoplasm. Its subcellular location is the secreted. It localises to the cell surface. It catalyses the reaction (2R)-2-phosphoglycerate = phosphoenolpyruvate + H2O. It participates in carbohydrate degradation; glycolysis; pyruvate from D-glyceraldehyde 3-phosphate: step 4/5. In terms of biological role, catalyzes the reversible conversion of 2-phosphoglycerate (2-PG) into phosphoenolpyruvate (PEP). It is essential for the degradation of carbohydrates via glycolysis. This chain is Enolase, found in Oceanobacillus iheyensis (strain DSM 14371 / CIP 107618 / JCM 11309 / KCTC 3954 / HTE831).